The following is a 178-amino-acid chain: ATP-dependent protease subunit HslV (178 aa).

Threonine 7 is a catalytic residue. Positions 162, 165, and 168 each coordinate Na(+).

The protein belongs to the peptidase T1B family. HslV subfamily. In terms of assembly, a double ring-shaped homohexamer of HslV is capped on each side by a ring-shaped HslU homohexamer. The assembly of the HslU/HslV complex is dependent on binding of ATP.

It localises to the cytoplasm. It catalyses the reaction ATP-dependent cleavage of peptide bonds with broad specificity.. With respect to regulation, allosterically activated by HslU binding. Functionally, protease subunit of a proteasome-like degradation complex believed to be a general protein degrading machinery. The chain is ATP-dependent protease subunit HslV from Burkholderia vietnamiensis (strain G4 / LMG 22486) (Burkholderia cepacia (strain R1808)).